Here is a 476-residue protein sequence, read N- to C-terminus: Angiotensinogen (476 aa).

Residues 1–24 form the signal peptide; that stretch reads MAPAGLSLGATILCLLAWAGLAAG. Cysteine 42 and cysteine 161 form a disulfide bridge. The tract at residues 45–64 is disordered; sequence LEKPSVETPADPTLTPVPIQ. An N-linked (GlcNAc...) asparagine glycan is attached at asparagine 295.

It belongs to the serpin family. Post-translationally, in response to low blood pressure, the enzyme renin/REN cleaves angiotensinogen to produce angiotensin-1. Angiotensin-1 is a substrate of ACE (angiotensin converting enzyme) that removes a dipeptide to yield the physiologically active peptide angiotensin-2. Angiotensin-1 and angiotensin-2 can be further processed to generate angiotensin-3, angiotensin-4. Angiotensin 1-9 is cleaved from angiotensin-1 by ACE2 and can be further processed by ACE to produce angiotensin 1-7, angiotensin 1-5 and angiotensin 1-4. Angiotensin 1-7 has also been proposed to be cleaved from angiotensin-2 by ACE2 or from angiotensin-1 by MME (neprilysin). The disulfide bond is labile. Angiotensinogen is present in the circulation in a near 40:60 ratio with the oxidized disulfide-bonded form, which preferentially interacts with receptor-bound renin.

The protein resides in the secreted. Essential component of the renin-angiotensin system (RAS), a potent regulator of blood pressure, body fluid and electrolyte homeostasis. Its function is as follows. Acts directly on vascular smooth muscle as a potent vasoconstrictor, affects cardiac contractility and heart rate through its action on the sympathetic nervous system, and alters renal sodium and water absorption through its ability to stimulate the zona glomerulosa cells of the adrenal cortex to synthesize and secrete aldosterone. Acts by binding to angiotensin receptors AGTR1 and AGTR2. Also binds the DEAR/FBXW7-AS1 receptor. Functionally, stimulates aldosterone release. In terms of biological role, is a ligand for the G-protein coupled receptor MAS1. Has vasodilator and antidiuretic effects. Has an antithrombotic effect that involves MAS1-mediated release of nitric oxide from platelets. The chain is Angiotensinogen (AGT) from Ovis aries (Sheep).